The chain runs to 1488 residues: Chromosome partition protein MukB (1488 aa).

34 to 41 contributes to the ATP binding site; sequence GGNGAGKS. Coiled coils occupy residues 326–418, 444–472, and 509–602; these read LEAD…QYNQ, LDTF…QTAH, and RHLA…QRAP. Positions 666–783 are flexible hinge; it reads PGGAEDQRLN…SLPIFGRAAR (118 aa). 3 coiled-coil regions span residues 835 to 923, 977 to 1116, and 1209 to 1265; these read EAEI…AKLE, EMLS…AKAG, and VEAI…LQSV. A disordered region spans residues 1049–1074; the sequence is ADSGAEERARQRRDELHAQLSNNRSR. Positions 1051–1065 are enriched in basic and acidic residues; that stretch reads SGAEERARQRRDELH.

Belongs to the SMC family. MukB subfamily. Homodimerization via its hinge domain. Binds to DNA via its C-terminal region. Interacts, and probably forms a ternary complex, with MukE and MukF via its C-terminal region. The complex formation is stimulated by calcium or magnesium. Interacts with tubulin-related protein FtsZ.

The protein resides in the cytoplasm. It is found in the nucleoid. Its function is as follows. Plays a central role in chromosome condensation, segregation and cell cycle progression. Functions as a homodimer, which is essential for chromosome partition. Involved in negative DNA supercoiling in vivo, and by this means organize and compact chromosomes. May achieve or facilitate chromosome segregation by condensation DNA from both sides of a centrally located replisome during cell division. This is Chromosome partition protein MukB from Salmonella typhi.